A 197-amino-acid chain; its full sequence is GTP cyclohydrolase 1 (197 aa).

The Zn(2+) site is built by C88, H91, and C160.

The protein belongs to the GTP cyclohydrolase I family. Homomer.

The enzyme catalyses GTP + H2O = 7,8-dihydroneopterin 3'-triphosphate + formate + H(+). It functions in the pathway cofactor biosynthesis; 7,8-dihydroneopterin triphosphate biosynthesis; 7,8-dihydroneopterin triphosphate from GTP: step 1/1. The polypeptide is GTP cyclohydrolase 1 (Clostridium beijerinckii (strain ATCC 51743 / NCIMB 8052) (Clostridium acetobutylicum)).